Here is a 316-residue protein sequence, read N- to C-terminus: tRNA uridine(34) hydroxylase (316 aa).

The region spanning 136 to 230 (ADENTVVVDK…YLEEVPREQS (95 aa)) is the Rhodanese domain. Cys-190 acts as the Cysteine persulfide intermediate in catalysis.

It belongs to the TrhO family.

The enzyme catalyses uridine(34) in tRNA + AH2 + O2 = 5-hydroxyuridine(34) in tRNA + A + H2O. In terms of biological role, catalyzes oxygen-dependent 5-hydroxyuridine (ho5U) modification at position 34 in tRNAs. The polypeptide is tRNA uridine(34) hydroxylase (Brucella abortus (strain 2308)).